Here is a 314-residue protein sequence, read N- to C-terminus: tRNA dimethylallyltransferase (314 aa).

11 to 18 (GPTGSGKT) is a binding site for ATP. A substrate-binding site is contributed by 13 to 18 (TGSGKT). An interaction with substrate tRNA region spans residues 36–39 (DSMQ).

This sequence belongs to the IPP transferase family. As to quaternary structure, monomer. Requires Mg(2+) as cofactor.

The enzyme catalyses adenosine(37) in tRNA + dimethylallyl diphosphate = N(6)-dimethylallyladenosine(37) in tRNA + diphosphate. In terms of biological role, catalyzes the transfer of a dimethylallyl group onto the adenine at position 37 in tRNAs that read codons beginning with uridine, leading to the formation of N6-(dimethylallyl)adenosine (i(6)A). The chain is tRNA dimethylallyltransferase from Chlamydia trachomatis serovar D (strain ATCC VR-885 / DSM 19411 / UW-3/Cx).